Here is a 680-residue protein sequence, read N- to C-terminus: DNA-directed RNA polymerase subunit beta' (680 aa).

Cysteine 68, cysteine 70, cysteine 86, and cysteine 89 together coordinate Zn(2+). Positions 488, 490, and 492 each coordinate Mg(2+).

The protein belongs to the RNA polymerase beta' chain family. RpoC1 subfamily. In terms of assembly, in plastids the minimal PEP RNA polymerase catalytic core is composed of four subunits: alpha, beta, beta', and beta''. When a (nuclear-encoded) sigma factor is associated with the core the holoenzyme is formed, which can initiate transcription. Requires Mg(2+) as cofactor. Zn(2+) serves as cofactor.

It is found in the plastid. Its subcellular location is the chloroplast. It catalyses the reaction RNA(n) + a ribonucleoside 5'-triphosphate = RNA(n+1) + diphosphate. In terms of biological role, DNA-dependent RNA polymerase catalyzes the transcription of DNA into RNA using the four ribonucleoside triphosphates as substrates. This Nicotiana tabacum (Common tobacco) protein is DNA-directed RNA polymerase subunit beta'.